A 318-amino-acid polypeptide reads, in one-letter code: Dimethyladenosine transferase (318 aa).

6 residues coordinate S-adenosyl-L-methionine: His-37, Leu-39, Gly-64, Glu-85, Asp-113, and Asn-128.

It belongs to the class I-like SAM-binding methyltransferase superfamily. rRNA adenine N(6)-methyltransferase family.

It localises to the cytoplasm. The protein resides in the nucleus. The protein localises to the nucleolus. The enzyme catalyses adenosine(1779)/adenosine(1780) in 18S rRNA + 4 S-adenosyl-L-methionine = N(6)-dimethyladenosine(1779)/N(6)-dimethyladenosine(1780) in 18S rRNA + 4 S-adenosyl-L-homocysteine + 4 H(+). Functionally, specifically dimethylates two adjacent adenosines in the loop of a conserved hairpin near the 3'-end of 18S rRNA in the 40S particle. This chain is Dimethyladenosine transferase, found in Saccharomyces cerevisiae (strain ATCC 204508 / S288c) (Baker's yeast).